Here is a 123-residue protein sequence, read N- to C-terminus: MKLVILLSFVATVAVFAAPSAPAGLEEKLRALQEQLYSLEKENGVDVKQKEQPAAADTFLGFVPQKRMVAWQPMKRSMINEDSRAPLLHAIEARLAEVLRAGERLGVNPEEVLADLRARNQFQ.

Residues 1-17 (MKLVILLSFVATVAVFA) form the signal peptide. 3 consecutive propeptides follow at residues 30 to 31 (RA), 66 to 67 (KR), and 75 to 76 (KR).

As to expression, expressed in intestinal cells.

It localises to the secreted. The protein resides in the cytoplasmic vesicle. Its function is as follows. Neuropeptide ligand for the G-protein coupled receptor aex-2. Activates and regulates the rhythmic calcium influx in DVB GABergic neurons during the defecation motor program, which is a coordinated series of three muscle contractions that occurs every 45 seconds. In Caenorhabditis elegans, this protein is Neuropeptide-like peptides nlp-40.